Here is a 697-residue protein sequence, read N- to C-terminus: Elongation factor G (697 aa).

The region spanning 8 to 290 is the tr-type G domain; it reads ERYRNIGISA…AVLDFLPSPV (283 aa). Residues 17 to 24, 88 to 92, and 142 to 145 each bind GTP; these read AHIDAGKT, DTPGH, and NKMD.

Belongs to the TRAFAC class translation factor GTPase superfamily. Classic translation factor GTPase family. EF-G/EF-2 subfamily.

Its subcellular location is the cytoplasm. Its function is as follows. Catalyzes the GTP-dependent ribosomal translocation step during translation elongation. During this step, the ribosome changes from the pre-translocational (PRE) to the post-translocational (POST) state as the newly formed A-site-bound peptidyl-tRNA and P-site-bound deacylated tRNA move to the P and E sites, respectively. Catalyzes the coordinated movement of the two tRNA molecules, the mRNA and conformational changes in the ribosome. The protein is Elongation factor G of Methylobacillus flagellatus (strain ATCC 51484 / DSM 6875 / VKM B-1610 / KT).